The chain runs to 471 residues: 3-isopropylmalate dehydratase large subunit (471 aa).

[4Fe-4S] cluster-binding residues include cysteine 347, cysteine 407, and cysteine 410.

This sequence belongs to the aconitase/IPM isomerase family. LeuC type 1 subfamily. As to quaternary structure, heterodimer of LeuC and LeuD. The cofactor is [4Fe-4S] cluster.

It catalyses the reaction (2R,3S)-3-isopropylmalate = (2S)-2-isopropylmalate. It participates in amino-acid biosynthesis; L-leucine biosynthesis; L-leucine from 3-methyl-2-oxobutanoate: step 2/4. In terms of biological role, catalyzes the isomerization between 2-isopropylmalate and 3-isopropylmalate, via the formation of 2-isopropylmaleate. This is 3-isopropylmalate dehydratase large subunit from Vibrio parahaemolyticus serotype O3:K6 (strain RIMD 2210633).